The sequence spans 245 residues: tRNA1(Val) (adenine(37)-N6)-methyltransferase (245 aa).

The protein belongs to the methyltransferase superfamily. tRNA (adenine-N(6)-)-methyltransferase family.

The protein localises to the cytoplasm. The enzyme catalyses adenosine(37) in tRNA1(Val) + S-adenosyl-L-methionine = N(6)-methyladenosine(37) in tRNA1(Val) + S-adenosyl-L-homocysteine + H(+). Functionally, specifically methylates the adenine in position 37 of tRNA(1)(Val) (anticodon cmo5UAC). In Salmonella paratyphi A (strain ATCC 9150 / SARB42), this protein is tRNA1(Val) (adenine(37)-N6)-methyltransferase.